A 411-amino-acid chain; its full sequence is Tyrosine--tRNA ligase (411 aa).

Position 36 (Y36) interacts with L-tyrosine. Positions 41–50 (PTADSLHVGH) match the 'HIGH' region motif. Y172 and Q176 together coordinate L-tyrosine. A 'KMSKS' region motif is present at residues 232–236 (KMGKT). Residue K235 coordinates ATP. Residues 344–409 (YSIANILVVT…GKKNHIKVII (66 aa)) enclose the S4 RNA-binding domain.

Belongs to the class-I aminoacyl-tRNA synthetase family. TyrS type 1 subfamily. As to quaternary structure, homodimer.

Its subcellular location is the cytoplasm. The enzyme catalyses tRNA(Tyr) + L-tyrosine + ATP = L-tyrosyl-tRNA(Tyr) + AMP + diphosphate + H(+). Catalyzes the attachment of tyrosine to tRNA(Tyr) in a two-step reaction: tyrosine is first activated by ATP to form Tyr-AMP and then transferred to the acceptor end of tRNA(Tyr). In Malacoplasma penetrans (strain HF-2) (Mycoplasma penetrans), this protein is Tyrosine--tRNA ligase.